Consider the following 252-residue polypeptide: MILHAQAKHGKPGLPWLVFLHGFSGDCHEWQEVGEAFADYSRLYVDLPGHGGSAAISVDGFDDVTGLLRKTLVSYNILNFWLVGYSLGGRVAMMAACQGMPGLCGVIVEGGHPGLQSAEQRAERQLSDRQWAQRFRSEPLTAVFTDWYQQPVFASLNDDQRRELVALRSNNNGATLAAMLEATSLAVQPDLRANLSARTFAFYYLCGERDSKFRALAAELAADCHVIPRAGHNTHRENPAGVIASLAQILRF.

It belongs to the AB hydrolase superfamily. MenH family. In terms of assembly, monomer.

It catalyses the reaction 5-enolpyruvoyl-6-hydroxy-2-succinyl-cyclohex-3-ene-1-carboxylate = (1R,6R)-6-hydroxy-2-succinyl-cyclohexa-2,4-diene-1-carboxylate + pyruvate. Its pathway is quinol/quinone metabolism; 1,4-dihydroxy-2-naphthoate biosynthesis; 1,4-dihydroxy-2-naphthoate from chorismate: step 3/7. The protein operates within quinol/quinone metabolism; menaquinone biosynthesis. In terms of biological role, catalyzes a proton abstraction reaction that results in 2,5-elimination of pyruvate from 2-succinyl-5-enolpyruvyl-6-hydroxy-3-cyclohexene-1-carboxylate (SEPHCHC) and the formation of 2-succinyl-6-hydroxy-2,4-cyclohexadiene-1-carboxylate (SHCHC). The protein is 2-succinyl-6-hydroxy-2,4-cyclohexadiene-1-carboxylate synthase of Escherichia fergusonii (strain ATCC 35469 / DSM 13698 / CCUG 18766 / IAM 14443 / JCM 21226 / LMG 7866 / NBRC 102419 / NCTC 12128 / CDC 0568-73).